The chain runs to 548 residues: Chaperonin GroEL (548 aa).

ATP contacts are provided by residues 30–33, lysine 51, 87–91, glycine 415, and aspartate 496; these read TLGP and DGTTT.

The protein belongs to the chaperonin (HSP60) family. As to quaternary structure, forms a cylinder of 14 subunits composed of two heptameric rings stacked back-to-back. Interacts with the co-chaperonin GroES.

It localises to the cytoplasm. The catalysed reaction is ATP + H2O + a folded polypeptide = ADP + phosphate + an unfolded polypeptide.. Its function is as follows. Together with its co-chaperonin GroES, plays an essential role in assisting protein folding. The GroEL-GroES system forms a nano-cage that allows encapsulation of the non-native substrate proteins and provides a physical environment optimized to promote and accelerate protein folding. The protein is Chaperonin GroEL of Haemophilus influenzae (strain PittGG).